Consider the following 296-residue polypeptide: Glycine--tRNA ligase alpha subunit (296 aa).

Belongs to the class-II aminoacyl-tRNA synthetase family. Tetramer of two alpha and two beta subunits.

It localises to the cytoplasm. It catalyses the reaction tRNA(Gly) + glycine + ATP = glycyl-tRNA(Gly) + AMP + diphosphate. This is Glycine--tRNA ligase alpha subunit from Francisella tularensis subsp. holarctica (strain FTNF002-00 / FTA).